A 119-amino-acid chain; its full sequence is UPF0145 protein Bcep18194_B0595 (119 aa).

Belongs to the UPF0145 family.

The polypeptide is UPF0145 protein Bcep18194_B0595 (Burkholderia lata (strain ATCC 17760 / DSM 23089 / LMG 22485 / NCIMB 9086 / R18194 / 383)).